An 84-amino-acid polypeptide reads, in one-letter code: Large ribosomal subunit protein bL27 (84 aa).

Residues 1-21 are disordered; it reads MAHKKGQGSTRNGRDSHSKRL. The segment covering 12–21 has biased composition (basic and acidic residues); the sequence is NGRDSHSKRL.

Belongs to the bacterial ribosomal protein bL27 family.

This chain is Large ribosomal subunit protein bL27, found in Methylacidiphilum infernorum (isolate V4) (Methylokorus infernorum (strain V4)).